The following is a 442-amino-acid chain: C4-dicarboxylate transport protein (442 aa).

The next 9 helical transmembrane spans lie at 13–33 (VLYF…HFYP), 49–69 (GIKM…IAGM), 81–101 (LALL…LVVV), 149–169 (AFAK…GFAL), 193–213 (MIAI…AFTI), 227–247 (LMGS…GIIA), 312–332 (IYLT…MTLL), 336–356 (TLLA…GSGF), and 357–377 (IVLA…LAII).

This sequence belongs to the dicarboxylate/amino acid:cation symporter (DAACS) (TC 2.A.23) family.

It localises to the cell membrane. Functionally, responsible for the transport of dicarboxylates such as succinate, fumarate, and malate across the membrane. The polypeptide is C4-dicarboxylate transport protein (Polynucleobacter asymbioticus (strain DSM 18221 / CIP 109841 / QLW-P1DMWA-1) (Polynucleobacter necessarius subsp. asymbioticus)).